The following is a 554-amino-acid chain: uncharacterized protein (554 aa).

Residues 1 to 25 (MSSSIPPRLYDMSPTESKKQEDVSE) form a disordered region. Residue Ser13 is modified to Phosphoserine. A run of 6 helical transmembrane segments spans residues 82 to 102 (FFVAGFGWMSDNIWPVCTSLI), 120 to 140 (APYLTLSQNLGLLVGAMVWSL), 149 to 169 (WAFNLTFLFTGVFAVIAGASP), 171 to 191 (FASICVFDALWSFGVGGNLPV), 210 to 230 (VMSFWWAIGQVIANLVSWGLI), and 253 to 273 (FLFTMGGMTLLMFAARFLVSV). Ser334 is subject to Phosphoserine. The next 6 helical transmembrane spans lie at 364–384 (LAISSILVILSWAVIGLAFPL), 412–432 (SLIVSAIGVPGSLIAGVLVEF), 437–457 (KGTLCLSLILTGVFLFASTTA), 462–482 (AYLGWNCTFSFFSDIMYGVLY), 497–517 (AVGLAASANRILGIFSPVIAM), and 525–545 (APIFVSGALFIFAGILVVFFP).

The protein belongs to the major facilitator superfamily.

It localises to the endoplasmic reticulum. It is found in the membrane. This is an uncharacterized protein from Schizosaccharomyces pombe (strain 972 / ATCC 24843) (Fission yeast).